The primary structure comprises 366 residues: DNA replication and repair protein RecF (366 aa).

Residue 30–37 (GRNAQGKT) coordinates ATP.

This sequence belongs to the RecF family.

It is found in the cytoplasm. In terms of biological role, the RecF protein is involved in DNA metabolism; it is required for DNA replication and normal SOS inducibility. RecF binds preferentially to single-stranded, linear DNA. It also seems to bind ATP. In Streptococcus thermophilus (strain CNRZ 1066), this protein is DNA replication and repair protein RecF.